Consider the following 347-residue polypeptide: D-alanine--D-alanine ligase (347 aa).

Residues 131-333 (KRVLESAGIA…YPDLIERLVE (203 aa)) enclose the ATP-grasp domain. 161–216 (EEELTYPVFTKPSNMGSSVGISKSENQEELRQALKLAFQYDSRVLVEQGVNAREIE) contacts ATP. Aspartate 287, glutamate 300, and asparagine 302 together coordinate Mg(2+).

It belongs to the D-alanine--D-alanine ligase family. Requires Mg(2+) as cofactor. Mn(2+) serves as cofactor.

The protein resides in the cytoplasm. The enzyme catalyses 2 D-alanine + ATP = D-alanyl-D-alanine + ADP + phosphate + H(+). The protein operates within cell wall biogenesis; peptidoglycan biosynthesis. In terms of biological role, cell wall formation. This Streptococcus pneumoniae (strain Hungary19A-6) protein is D-alanine--D-alanine ligase.